Consider the following 705-residue polypeptide: MTFPLPLDHEHLQKLVTADLVRPDHLLGAHPTTEHGVQGVRFAVWAPNAQHVSVVGDFNDWNGFDHPLQRLDFGFWGAFVPAAQPGQRYKFRVTGAGGQTVDKTDPYGTFFEVRPNNASIIWQQDFEWTDAGWLEQRARRGQALEDPISIYECHVGSWARRDDGWFLNYRDLAHRLGEYVTYMGYTHVELLGVMEHPFDGSWGYQVTGYYAPTSRLGSPEDFKYLVNHLHSLGIGVLLDWVPGHFPTDEFALAHFDGSPLYEYADPRKGYHYDWNTYIFDYGRNEVVMFLIGSALKWVQDYHVDGLRVDAVASMLYLDFSRTEWVPNIYGGRENLEAIAFLKRLNEVAHHMAPGCLMIAEESTSFPGVTTPTPEGLGFDYKWAMGWMNDSLAYFEQDPIYRKYDHHKLTFFNVYRTSENYVLAISHDEVVHLKKPMVLKHPGDWYAQRADYRAFLAMMWTTPGKKLLFMGQDFAQGSEWNHDAPLPWFHADQPDHRGVMNLVRRLNELYRERPDWHTGDAREEGMAWISADDTDNSVYAYARRDTYSGAWSLVIANLTPVYREDYVIGVPQGGEYRVLLSTDDGEFGGFGTQQPDLSARDEAAHGQAHALHLNLPPSSVLVLEPVAAAPVKGLVSRQELTPELREVARQSAQAVQVERAADPRPNEQQRLVAETPAHEGGRSAPADAAESAEQKPDDEQKGGKKA.

The active-site Nucleophile is the Asp309. The active-site Proton donor is the Glu360. The disordered stretch occupies residues 654–705; sequence VQVERAADPRPNEQQRLVAETPAHEGGRSAPADAAESAEQKPDDEQKGGKKA. A compositionally biased stretch (basic and acidic residues) spans 691-705; sequence AEQKPDDEQKGGKKA.

The protein belongs to the glycosyl hydrolase 13 family. GlgB subfamily. As to quaternary structure, monomer.

It carries out the reaction Transfers a segment of a (1-&gt;4)-alpha-D-glucan chain to a primary hydroxy group in a similar glucan chain.. It functions in the pathway glycan biosynthesis; glycogen biosynthesis. Its function is as follows. Catalyzes the formation of the alpha-1,6-glucosidic linkages in glycogen by scission of a 1,4-alpha-linked oligosaccharide from growing alpha-1,4-glucan chains and the subsequent attachment of the oligosaccharide to the alpha-1,6 position. The protein is 1,4-alpha-glucan branching enzyme GlgB of Deinococcus radiodurans (strain ATCC 13939 / DSM 20539 / JCM 16871 / CCUG 27074 / LMG 4051 / NBRC 15346 / NCIMB 9279 / VKM B-1422 / R1).